Here is a 101-residue protein sequence, read N- to C-terminus: MAKKSSVEKNKRRRKMVAQQAPKREALRAIARDRTLPPEERFQAVLKLAEMPRNGSKVRIRNRCELTGRPRAYYRKFRLSRVTLRELASTGQIPGMTKSSW.

A disordered region spans residues Met-1 to Lys-23.

It belongs to the universal ribosomal protein uS14 family. Part of the 30S ribosomal subunit. Contacts proteins S3 and S10.

In terms of biological role, binds 16S rRNA, required for the assembly of 30S particles and may also be responsible for determining the conformation of the 16S rRNA at the A site. This chain is Small ribosomal subunit protein uS14, found in Rhodospirillum centenum (strain ATCC 51521 / SW).